We begin with the raw amino-acid sequence, 129 residues long: Large-conductance mechanosensitive channel (129 aa).

3 consecutive transmembrane segments (helical) span residues 8–28 (FIMR…AAFT), 30–50 (IVKS…AGAV), and 67–87 (GAVL…FLII).

It belongs to the MscL family. In terms of assembly, homopentamer.

Its subcellular location is the cell membrane. Functionally, channel that opens in response to stretch forces in the membrane lipid bilayer. May participate in the regulation of osmotic pressure changes within the cell. The polypeptide is Large-conductance mechanosensitive channel (Oenococcus oeni (strain ATCC BAA-331 / PSU-1)).